The sequence spans 287 residues: Inorganic pyrophosphatase (287 aa).

A Phosphothreonine modification is found at T65. Residue R79 coordinates diphosphate. The Proton donor role is filled by Y90. 3 residues coordinate Mg(2+): D116, D121, and D153. K239 participates in a covalent cross-link: Glycyl lysine isopeptide (Lys-Gly) (interchain with G-Cter in ubiquitin). A Phosphothreonine modification is found at T251. Position 266 is a phosphoserine (S266). A Glycyl lysine isopeptide (Lys-Gly) (interchain with G-Cter in ubiquitin) cross-link involves residue K279. Phosphoserine is present on S286.

The protein belongs to the PPase family. Homodimer. Requires Mg(2+) as cofactor.

The protein resides in the cytoplasm. It catalyses the reaction diphosphate + H2O = 2 phosphate + H(+). This Saccharomyces cerevisiae (strain ATCC 204508 / S288c) (Baker's yeast) protein is Inorganic pyrophosphatase (IPP1).